The sequence spans 409 residues: Argininosuccinate synthase (409 aa).

10 to 18 contributes to the ATP binding site; the sequence is AYSGGLDTS. Position 87 (Tyr87) interacts with L-citrulline. An ATP-binding site is contributed by Gly117. Residues Thr119, Asn123, and Asp124 each coordinate L-aspartate. Asn123 contributes to the L-citrulline binding site. L-citrulline-binding residues include Arg127, Ser175, Ser184, Glu260, and Tyr272.

It belongs to the argininosuccinate synthase family. Type 1 subfamily. Homotetramer.

It is found in the cytoplasm. The enzyme catalyses L-citrulline + L-aspartate + ATP = 2-(N(omega)-L-arginino)succinate + AMP + diphosphate + H(+). Its pathway is amino-acid biosynthesis; L-arginine biosynthesis; L-arginine from L-ornithine and carbamoyl phosphate: step 2/3. This Rubrobacter xylanophilus (strain DSM 9941 / JCM 11954 / NBRC 16129 / PRD-1) protein is Argininosuccinate synthase.